The primary structure comprises 596 residues: Aspartate--tRNA(Asp/Asn) ligase (596 aa).

Position 175 (Glu175) interacts with L-aspartate. Positions 199–202 are aspartate; it reads QMFK. Arg221 and His451 together coordinate L-aspartate. 221–223 is an ATP binding site; that stretch reads RDE. Residue Glu485 participates in ATP binding. An L-aspartate-binding site is contributed by Arg492. 537–540 serves as a coordination point for ATP; it reads GVDR.

It belongs to the class-II aminoacyl-tRNA synthetase family. Type 1 subfamily. Homodimer.

The protein localises to the cytoplasm. It carries out the reaction tRNA(Asx) + L-aspartate + ATP = L-aspartyl-tRNA(Asx) + AMP + diphosphate. Functionally, aspartyl-tRNA synthetase with relaxed tRNA specificity since it is able to aspartylate not only its cognate tRNA(Asp) but also tRNA(Asn). Reaction proceeds in two steps: L-aspartate is first activated by ATP to form Asp-AMP and then transferred to the acceptor end of tRNA(Asp/Asn). The polypeptide is Aspartate--tRNA(Asp/Asn) ligase (Zymomonas mobilis subsp. mobilis (strain ATCC 31821 / ZM4 / CP4)).